A 487-amino-acid polypeptide reads, in one-letter code: MESAALSRIGLAGLAVMGQNLALNIAEKGFPISVYNRTTSKVDETLDRAAVEGNLPVSGQYSPRDFVLSIQRPRSLIILVKAGAPVDQTIDAFSEYMEPGDCIIDGGNEWYQNTERRISEAEQKGLLYLGMGVSGGEEGARNGPSLMPGGSFQAYDNIKDILEKVAAQVEDGPCVTYIGEGGSGNFVKMVHNGIEYGDMQLISEAYDVLKNVGGLSNEELAEIFTEWNSGELESFLVEITSDIFRVKDEFGDGELVDKILDKTGMKGTGKWTVQQAAELSVAAPTIAASLDCRYLSGLKDERENAAKVLREAGLKEEIGSASSGIDKKRLVDDVRQALYASKICSYAQGMNLLRAKSLEKSWNLNFGELARIWKGGCIIRAVFLDRIKKAYQRNPDLASLVVDPEFAKEMVQRQAAWRRVVGLAVSAGISTPGMCASLAYFDTYRRARLPANLVQAQRDLFGAHTYERTDRPGAYHTEWTKLARKNH.

Met-1 carries the post-translational modification N-acetylmethionine. Residues 13–18 (GLAVMG), 36–38 (NRT), 80–82 (VKA), and Asn-108 contribute to the NADP(+) site. Residues Asn-108 and 134 to 136 (SGG) contribute to the substrate site. Lys-188 acts as the Proton acceptor in catalysis. 191-192 (HN) contacts substrate. The active-site Proton donor is Glu-195. Substrate is bound by residues Tyr-196, Lys-266, Arg-293, Arg-458, and His-464.

This sequence belongs to the 6-phosphogluconate dehydrogenase family. In terms of assembly, forms homodimer. Forms heterodimers with PGD2 or PGD3.

It is found in the plastid. The protein resides in the chloroplast. Its subcellular location is the cytoplasm. The protein localises to the cytosol. It catalyses the reaction 6-phospho-D-gluconate + NADP(+) = D-ribulose 5-phosphate + CO2 + NADPH. It participates in carbohydrate degradation; pentose phosphate pathway; D-ribulose 5-phosphate from D-glucose 6-phosphate (oxidative stage): step 3/3. Catalyzes the oxidative decarboxylation of 6-phosphogluconate to ribulose 5-phosphate and CO(2), with concomitant reduction of NADP to NADPH. The protein is 6-phosphogluconate dehydrogenase, decarboxylating 1, chloroplastic of Arabidopsis thaliana (Mouse-ear cress).